Consider the following 22-residue polypeptide: MICOS complex subunit MIC60 (22 aa).

It belongs to the MICOS complex subunit Mic60 family. Component of the mitochondrial contact site and cristae organizing system (MICOS) complex, composed of at least MICOS10/MIC10, CHCHD3/MIC19, CHCHD6/MIC25, APOOL/MIC27, IMMT/MIC60, APOO/MIC23/MIC26 and MICOS13/MIC13. This complex was also known under the names MINOS or MitOS complex. The MICOS complex associates with mitochondrial outer membrane proteins SAMM50, MTX1 and MTX2 (together described as components of the mitochondrial outer membrane sorting assembly machinery (SAM) complex) and DNAJC11, mitochondrial inner membrane protein TMEM11 and with HSPA9. The MICOS and SAM complexes together with DNAJC11 are part of a large protein complex spanning both membranes termed the mitochondrial intermembrane space bridging (MIB) complex. Interacts with HSPA1A/HSPA1B and OPA1, preferentially with the soluble OPA1 form. Interacts with MICOS13/MIC13, MICOS10/MIC10, CHCHD3/MIC19, CHCHD6/MIC25, SAMM50 and TMEM11. Interacts with APOO/MIC23/MIC26 and APOOL/MIC27. Interacts with ARMC1. Interacts with ARMC12.

It localises to the mitochondrion inner membrane. It is found in the mitochondrion. In terms of biological role, component of the MICOS complex, a large protein complex of the mitochondrial inner membrane that plays crucial roles in the maintenance of crista junctions, inner membrane architecture, and formation of contact sites to the outer membrane. Plays an important role in the maintenance of the MICOS complex stability and the mitochondrial cristae morphology. This chain is MICOS complex subunit MIC60, found in Mesocricetus auratus (Golden hamster).